Reading from the N-terminus, the 944-residue chain is 2-oxoglutarate dehydrogenase E1 component (944 aa).

The interval 914–944 (RRRRSSPAEGDPTVHKKEQERIVSDSLTRKN) is disordered. The span at 925–936 (PTVHKKEQERIV) shows a compositional bias: basic and acidic residues.

This sequence belongs to the alpha-ketoglutarate dehydrogenase family. In terms of assembly, homodimer. Part of the 2-oxoglutarate dehydrogenase (OGDH) complex composed of E1 (2-oxoglutarate dehydrogenase), E2 (dihydrolipoamide succinyltransferase) and E3 (dihydrolipoamide dehydrogenase); the complex contains multiple copies of the three enzymatic components (E1, E2 and E3). The cofactor is thiamine diphosphate.

It catalyses the reaction N(6)-[(R)-lipoyl]-L-lysyl-[protein] + 2-oxoglutarate + H(+) = N(6)-[(R)-S(8)-succinyldihydrolipoyl]-L-lysyl-[protein] + CO2. Functionally, E1 component of the 2-oxoglutarate dehydrogenase (OGDH) complex which catalyzes the decarboxylation of 2-oxoglutarate, the first step in the conversion of 2-oxoglutarate to succinyl-CoA and CO(2). The polypeptide is 2-oxoglutarate dehydrogenase E1 component (Bacillus subtilis (strain 168)).